We begin with the raw amino-acid sequence, 449 residues long: Adenosylhomocysteinase (449 aa).

Ser2 is subject to N-acetylserine. Residue Lys21 forms a Glycyl lysine isopeptide (Lys-Gly) (interchain with G-Cter in ubiquitin) linkage. Positions 58, 134, and 159 each coordinate substrate. 160–162 (TTT) lines the NAD(+) pocket. Substrate contacts are provided by Lys189 and Asp193. NAD(+) is bound by residues Asn194, 223–228 (GYGDVG), Glu246, 302–304 (IGH), and Asn349. Thr393 is subject to Phosphothreonine. Residue Lys413 forms a Glycyl lysine isopeptide (Lys-Gly) (interchain with G-Cter in ubiquitin) linkage.

This sequence belongs to the adenosylhomocysteinase family. NAD(+) is required as a cofactor.

The catalysed reaction is S-adenosyl-L-homocysteine + H2O = L-homocysteine + adenosine. The protein operates within amino-acid biosynthesis; L-homocysteine biosynthesis; L-homocysteine from S-adenosyl-L-homocysteine: step 1/1. Its function is as follows. Adenosylhomocysteine is a competitive inhibitor of S-adenosyl-L-methionine-dependent methyl transferase reactions; therefore adenosylhomocysteinase may play a key role in the control of methylations via regulation of the intracellular concentration of adenosylhomocysteine. The protein is Adenosylhomocysteinase (SAH1) of Saccharomyces cerevisiae (strain ATCC 204508 / S288c) (Baker's yeast).